Consider the following 206-residue polypeptide: Small ribosomal subunit protein uS5 (206 aa).

Residues methionine 1–aspartate 15 are compositionally biased toward polar residues. Residues methionine 1–tryptophan 50 form a disordered region. The span at arginine 38–tryptophan 50 shows a compositional bias: basic and acidic residues. The S5 DRBM domain maps to tryptophan 50–valine 113.

Belongs to the universal ribosomal protein uS5 family. Part of the 30S ribosomal subunit. Contacts proteins S4 and S8.

In terms of biological role, with S4 and S12 plays an important role in translational accuracy. Located at the back of the 30S subunit body where it stabilizes the conformation of the head with respect to the body. The protein is Small ribosomal subunit protein uS5 of Prochlorococcus marinus (strain MIT 9215).